The sequence spans 274 residues: 2,3,4,5-tetrahydropyridine-2,6-dicarboxylate N-succinyltransferase (274 aa).

Substrate is bound by residues arginine 105 and aspartate 142.

Belongs to the transferase hexapeptide repeat family. In terms of assembly, homotrimer.

The protein localises to the cytoplasm. The catalysed reaction is (S)-2,3,4,5-tetrahydrodipicolinate + succinyl-CoA + H2O = (S)-2-succinylamino-6-oxoheptanedioate + CoA. Its pathway is amino-acid biosynthesis; L-lysine biosynthesis via DAP pathway; LL-2,6-diaminopimelate from (S)-tetrahydrodipicolinate (succinylase route): step 1/3. This is 2,3,4,5-tetrahydropyridine-2,6-dicarboxylate N-succinyltransferase from Thiobacillus denitrificans (strain ATCC 25259 / T1).